We begin with the raw amino-acid sequence, 777 residues long: Glucocorticoid receptor (777 aa).

Positions Met1–Asn14 are enriched in basic and acidic residues. A disordered region spans residues Met1–Glu22. The tract at residues Met1–Leu420 is modulating. Thr8 carries the post-translational modification Phosphothreonine. Arg23 is subject to Omega-N-methylarginine. Ser45, Ser113, Ser134, and Ser141 each carry phosphoserine. Residues Asn130–Leu183 are disordered. Over residues Ser134 to Ala150 the composition is skewed to low complexity. Positions Pro151–Val163 are enriched in basic and acidic residues. Residues Ser164–Thr174 show a composition bias toward polar residues. 3 positions are modified to phosphoserine: Ser203, Ser211, and Ser226. A Glycyl lysine isopeptide (Lys-Gly) (interchain with G-Cter in SUMO2) cross-link involves residue Lys258. Ser267 is modified (phosphoserine). Glycyl lysine isopeptide (Lys-Gly) (interchain with G-Cter in SUMO); alternate cross-links involve residues Lys277 and Lys293. Glycyl lysine isopeptide (Lys-Gly) (interchain with G-Cter in SUMO2); alternate cross-links involve residues Lys277 and Lys293. A compositionally biased stretch (low complexity) spans Ser394 to Thr414. Residues Ser394 to Gly415 are disordered. The residue at position 404 (Ser404) is a Phosphoserine. A Glycyl lysine isopeptide (Lys-Gly) (interchain with G-Cter in ubiquitin) cross-link involves residue Lys419. NR C4-type zinc fingers lie at residues Cys421–Cys441 and Cys457–Cys481. A DNA-binding region (nuclear receptor) is located at residues Cys421–Met486. Lys480, Lys492, Lys494, and Lys495 each carry N6-acetyllysine. The tract at residues Gly485–Lys777 is interaction with CLOCK. The interval Asn487–Ala523 is hinge. Residues Thr524 to Thr758 form the NR LBD domain. Positions Leu532–Leu697 are interaction with CRY1. A Glycyl lysine isopeptide (Lys-Gly) (interchain with G-Cter in SUMO) cross-link involves residue Lys703.

Belongs to the nuclear hormone receptor family. NR3 subfamily. In terms of assembly, heteromultimeric cytoplasmic complex with HSP90AA1, HSPA1A/HSPA1B, and FKBP5 or another immunophilin such as PPID, STIP1, or the immunophilin homolog PPP5C. Upon ligand binding FKBP5 dissociates from the complex and FKBP4 takes its place, thereby linking the complex to dynein and mediating transport to the nucleus, where the complex dissociates. Probably forms a complex composed of chaperones HSP90 and HSP70, co-chaperones CDC37, PPP5C, TSC1 and client protein TSC2, CDK4, AKT, RAF1 and NR3C1; this complex does not contain co-chaperones STIP1/HOP and PTGES3/p23. Directly interacts with UNC45A. Binds to DNA as a homodimer, and as heterodimer with NR3C2 or the retinoid X receptor. Binds STAT5A and STAT5B homodimers and heterodimers. Interacts with NRIP1, POU2F1, POU2F2 and TRIM28. Interacts with several coactivator complexes, including the SMARCA4 complex, CREBBP/EP300, TADA2L (Ada complex) and p160 coactivators such as NCOA2 and NCOA6. Interaction with BAG1 inhibits transactivation. Interacts with HEXIM1 and TGFB1I1. Interacts with NCOA1. Interacts with NCOA3, SMARCA4, SMARCC1, SMARCD1, and SMARCE1. Interacts with CLOCK, CRY1 and CRY2 in a ligand-dependent fashion. Interacts with CIART. Interacts with RWDD3. Interacts with UBE2I/UBC9 and this interaction is enhanced in the presence of RWDD3. Interacts with GRIP1. Interacts with NR4A3 (via nuclear receptor DNA-binding domain), represses transcription activity of NR4A3 on the POMC promoter Nur response element (NurRE). Directly interacts with PNRC2 to attract and form a complex with UPF1 and DCP1A; the interaction leads to rapid mRNA degradation. Interacts with GSK3B. Interacts with FNIP1 and FNIP2. Interacts (via C-terminus) with HNRNPU (via C-terminus). Interacts with MCM3AP. Interacts (via domain NR LBD) with HSP90AA1 and HSP90AB1. In the absence of hormonal ligand, interacts with TACC1. Interacts (via NR LBD domain) with ZNF764 (via KRAB domain); the interaction regulates transcription factor activity of NR3C1 by directing its actions toward certain biologic pathways. Post-translationally, acetylation by CLOCK reduces its binding to glucocorticoid response elements and its transcriptional activity. In terms of processing, increased proteasome-mediated degradation in response to glucocorticoids. Phosphorylated in the absence of hormone; becomes hyperphosphorylated in the presence of glucocorticoid. The Ser-203, Ser-226 and Ser-404-phosphorylated forms are mainly cytoplasmic, and the Ser-211-phosphorylated form is nuclear. Phosphorylation at Ser-211 increases transcriptional activity. Phosphorylation at Ser-203, Ser-226 and Ser-404 decreases signaling capacity. Phosphorylation at Ser-404 may protect from glucocorticoid-induced apoptosis. Phosphorylation at Ser-203 and Ser-211 is not required in regulation of chromosome segregation. May be dephosphorylated by PPP5C, attenuates NR3C1 action. Post-translationally, ubiquitinated by UBR5, leading to its degradation: UBR5 specifically recognizes and binds ligand-bound NR3C1 when it is not associated with coactivators (NCOAs). In presence of NCOAs, the UBR5-degron is not accessible, preventing its ubiquitination and degradation. In terms of processing, sumoylation at Lys-277 and Lys-293 negatively regulates its transcriptional activity. Sumoylation at Lys-703 positively regulates its transcriptional activity in the presence of RWDD3. Sumoylation at Lys-277 and Lys-293 is dispensable whereas sumoylation at Lys-703 is critical for the stimulatory effect of RWDD3 on its transcriptional activity. Heat shock increases sumoylation in a RWDD3-dependent manner.

The protein resides in the cytoplasm. Its subcellular location is the nucleus. It localises to the mitochondrion. The protein localises to the cytoskeleton. It is found in the spindle. The protein resides in the microtubule organizing center. Its subcellular location is the centrosome. It localises to the chromosome. The protein localises to the nucleoplasm. Receptor for glucocorticoids (GC). Has a dual mode of action: as a transcription factor that binds to glucocorticoid response elements (GRE), both for nuclear and mitochondrial DNA, and as a modulator of other transcription factors. Affects inflammatory responses, cellular proliferation and differentiation in target tissues. Involved in chromatin remodeling. Plays a role in rapid mRNA degradation by binding to the 5' UTR of target mRNAs and interacting with PNRC2 in a ligand-dependent manner which recruits the RNA helicase UPF1 and the mRNA-decapping enzyme DCP1A, leading to RNA decay. Could act as a coactivator for STAT5-dependent transcription upon growth hormone (GH) stimulation and could reveal an essential role of hepatic GR in the control of body growth. Mediates glucocorticoid-induced apoptosis. Promotes accurate chromosome segregation during mitosis. May act as a tumor suppressor. May play a negative role in adipogenesis through the regulation of lipolytic and antilipogenic gene expression. The protein is Glucocorticoid receptor (NR3C1) of Saguinus oedipus (Cotton-top tamarin).